A 77-amino-acid chain; its full sequence is DNA-directed RNA polymerase subunit Rpo5 (77 aa).

This sequence belongs to the archaeal Rpo5/eukaryotic RPB5 RNA polymerase subunit family. In terms of assembly, part of the RNA polymerase complex.

It localises to the cytoplasm. The catalysed reaction is RNA(n) + a ribonucleoside 5'-triphosphate = RNA(n+1) + diphosphate. Functionally, DNA-dependent RNA polymerase (RNAP) catalyzes the transcription of DNA into RNA using the four ribonucleoside triphosphates as substrates. The chain is DNA-directed RNA polymerase subunit Rpo5 from Methanothermobacter thermautotrophicus (strain ATCC 29096 / DSM 1053 / JCM 10044 / NBRC 100330 / Delta H) (Methanobacterium thermoautotrophicum).